The primary structure comprises 359 residues: MDWNFKLSSGYLSGFDQEPDLSPMDGSISFGGSSQSKADFSFDLKLGRNIGNSSSVFGDTEQVISLSKWKDSALAKPEGSRSSSSKRTRGNGVGTNQMPICLVDGCDSDFSNCREYHKRHKVCDVHSKTPVVTINGHKQRFCQQCSRFHALEEFDEGKRSCRKRLDGHNRRRRKPQPEHIGRPANFFTGFQGSKLLEFSGGSHVFPTTSVLNPSWGNSLVSVAVAANGSSYGQSQSYVVGSSPAKTGIMFPISSSPNSTRSIAKQFPFLQEEESSRTASLCERMTSCIHDSDCALSLLSSSSSSVPHLLQPPLSLSQEAVETVFYGSGLFENASAVSDGSVISGNEAVRLPQTFPFHWE.

The disordered stretch occupies residues 75–94; the sequence is AKPEGSRSSSSKRTRGNGVG. The segment at 98–175 adopts an SBP-type zinc-finger fold; that stretch reads MPICLVDGCD…DGHNRRRRKP (78 aa). Cysteine 101, cysteine 106, cysteine 123, histidine 126, cysteine 142, cysteine 145, histidine 149, and cysteine 161 together coordinate Zn(2+). A Bipartite nuclear localization signal motif is present at residues 158–174; that stretch reads KRSCRKRLDGHNRRRRK.

Zn(2+) serves as cofactor.

Its subcellular location is the nucleus. Trans-acting factor that binds specifically to the consensus nucleotide sequence 5'-TNCGTACAA-3'. The protein is Squamosa promoter-binding-like protein 13A (SPL13A) of Arabidopsis thaliana (Mouse-ear cress).